Consider the following 186-residue polypeptide: Ran guanine nucleotide release factor (186 aa).

The interaction with RAN stretch occupies residues 27-70; it reads DLRPVPDNQEVFCHPVTDQSLIVELLELQAHVRGEAAARYHFED.

Belongs to the MOG1 family. In terms of assembly, monomer. Interacts with RAN, both RAN-GTP and RAN-GDP. Competes with RCC1 for a common binding site on RAN and thereby inhibits RCC1-mediated nucleotide exchange. Forms a complex with RAN-GTP and RANBP1. Interacts with the cytoplasmic loop 2 of SCN5A. Isoform 1 and isoform 2 are ubiquitously expressed. Detected in heart and brain.

It is found in the nucleus. The protein localises to the cytoplasm. It localises to the perinuclear region. Its subcellular location is the cell membrane. In terms of biological role, may regulate the intracellular trafficking of RAN. Promotes guanine nucleotide release from RAN and inhibits binding of new GTP by preventing the binding of the RAN guanine nucleotide exchange factor RCC1. Regulates the levels of GTP-bound RAN in the nucleus, and thereby plays a role in the regulation of RAN-dependent mitotic spindle dynamics. Enhances the expression of SCN5A at the cell membrane in cardiomyocytes. The protein is Ran guanine nucleotide release factor (RANGRF) of Homo sapiens (Human).